A 651-amino-acid chain; its full sequence is Coronin-like protein (651 aa).

4 WD repeats span residues 79 to 110, 138 to 169, 180 to 210, and 226 to 257; these read GHTA…GIWD, GHAR…KLWN, KHPD…RVWN, and AKNQ…GIWD. Residues 408-609 form a disordered region; the sequence is APSFHEAKRP…TSPKSLGLKK (202 aa). The span at 427–451 shows a compositional bias: basic and acidic residues; the sequence is LEEKKEQPKVEKPISESEKEVKQEA. 3 positions are modified to phosphoserine: Ser-441, Ser-454, and Ser-456. Residues 452–465 show a composition bias toward low complexity; it reads PKSPSPLKSASSSS. Phosphothreonine is present on residues Thr-517 and Thr-529. 2 stretches are compositionally biased toward basic and acidic residues: residues 523–540 and 547–572; these read ETKK…ELKP and TDRK…EQEK. Phosphoserine is present on residues Ser-573 and Ser-579. Residues 578-590 show a composition bias toward low complexity; sequence SSITAAKTAITAS. Residues 618–650 are a coiled coil; sequence VLQLEDVVDKLTKANLDKDERLLKLEQKIGELS.

The protein belongs to the WD repeat coronin family. In terms of assembly, binds to F-actin.

The sequence is that of Coronin-like protein (CRN1) from Saccharomyces cerevisiae (strain ATCC 204508 / S288c) (Baker's yeast).